Here is a 58-residue protein sequence, read N- to C-terminus: UPF0391 membrane protein Sputcn32_1322 (58 aa).

The next 2 helical transmembrane spans lie at 6-26 (LMFL…IAGA) and 28-48 (AGIA…SLLV).

Belongs to the UPF0391 family.

The protein resides in the cell membrane. In Shewanella putrefaciens (strain CN-32 / ATCC BAA-453), this protein is UPF0391 membrane protein Sputcn32_1322.